The chain runs to 211 residues: Tudor-interacting repair regulator protein (211 aa).

Glycyl lysine isopeptide (Lys-Gly) (interchain with G-Cter in ubiquitin) cross-links involve residues K10 and K151. Positions 118–205 (TLEQLHAVEI…TEKQKKALEK (88 aa)) are interaction with PXN.

The protein belongs to the Nudix hydrolase family. TIRR subfamily. In terms of assembly, homodimer. Interacts with TP53BP1 (via the Tudor-like domain); interaction is abolished following DNA damage and TP53BP1 phosphorylation by ATM. Interacts (via the cytoplasmic part) with SDC4. Interacts with TGFB1I1 and PXN.

The protein localises to the nucleus. Its function is as follows. Key regulator of TP53BP1 required to stabilize TP53BP1 and regulate its recruitment to chromatin. In absence of DNA damage, interacts with the tandem Tudor-like domain of TP53BP1, masking the region that binds histone H4 dimethylated at 'Lys-20' (H4K20me2), thereby preventing TP53BP1 recruitment to chromatin and maintaining TP53BP1 localization to the nucleus. Following DNA damage, ATM-induced phosphorylation of TP53BP1 and subsequent recruitment of RIF1 leads to dissociate NUDT16L1/TIRR from TP53BP1, unmasking the tandem Tudor-like domain and allowing recruitment of TP53BP1 to DNA double strand breaks (DSBs). Binds U8 snoRNA. The sequence is that of Tudor-interacting repair regulator protein from Mus musculus (Mouse).